The following is a 495-amino-acid chain: Lysine--tRNA ligase (495 aa).

Residues Glu-406 and Glu-413 each coordinate Mg(2+).

This sequence belongs to the class-II aminoacyl-tRNA synthetase family. Homodimer. Requires Mg(2+) as cofactor.

It localises to the cytoplasm. The catalysed reaction is tRNA(Lys) + L-lysine + ATP = L-lysyl-tRNA(Lys) + AMP + diphosphate. The chain is Lysine--tRNA ligase (lysS) from Staphylococcus aureus.